We begin with the raw amino-acid sequence, 248 residues long: Probable pyridoxal 5'-phosphate synthase subunit pdx2 (248 aa).

70 to 72 (GES) contributes to the L-glutamine binding site. The active-site Nucleophile is Cys-106. Residues Arg-136 and 174–175 (IR) contribute to the L-glutamine site. Catalysis depends on charge relay system residues His-221 and Glu-223.

It belongs to the glutaminase PdxT/SNO family.

The catalysed reaction is aldehydo-D-ribose 5-phosphate + D-glyceraldehyde 3-phosphate + L-glutamine = pyridoxal 5'-phosphate + L-glutamate + phosphate + 3 H2O + H(+). It catalyses the reaction L-glutamine + H2O = L-glutamate + NH4(+). It participates in cofactor biosynthesis; pyridoxal 5'-phosphate biosynthesis. Its function is as follows. Catalyzes the hydrolysis of glutamine to glutamate and ammonia as part of the biosynthesis of pyridoxal 5'-phosphate. The resulting ammonia molecule is channeled to the active site of pdx1. The protein is Probable pyridoxal 5'-phosphate synthase subunit pdx2 of Dictyostelium discoideum (Social amoeba).